Here is a 65-residue protein sequence, read N- to C-terminus: MKALVGFRKKNKKDLYTELLQLLREQFNLRMQSVSGKLKQPHLLRKVRRNIAQVKTLLDSKEEIK.

The protein belongs to the universal ribosomal protein uL29 family.

The protein is Large ribosomal subunit protein uL29 of Buchnera aphidicola subsp. Acyrthosiphon pisum (strain 5A).